Reading from the N-terminus, the 132-residue chain is Fumarate reductase subunit C (132 aa).

The next 3 membrane-spanning stretches (helical) occupy residues 36-56 (AIPT…LGSL), 70-90 (IVII…VTYY), and 110-130 (IITM…LVFM).

This sequence belongs to the FrdC family. In terms of assembly, part of an enzyme complex containing four subunits: a flavoprotein (FrdA), an iron-sulfur protein (FrdB), and two hydrophobic anchor proteins (FrdC and FrdD).

The protein resides in the cell inner membrane. Anchors the catalytic components of the fumarate reductase complex to the cell membrane, binds quinones. This chain is Fumarate reductase subunit C, found in Pasteurella multocida (strain Pm70).